The primary structure comprises 180 residues: Pro-glucagon (180 aa).

A signal peptide spans 1–20; the sequence is MKSIYFVAGLFVMLVQGSWQ. The disordered stretch occupies residues 23–56; the sequence is LQDTEEKPRSFSTSQTDLLDDPDQMNEDKRHSQG. Ser54 bears the Phosphoserine mark. A propeptide spanning residues 84–89 is cleaved from the precursor; it reads NRNEIA. Ser105 and Ser108 each carry phosphoserine. Arg127 is subject to Arginine amide. Positions 131 to 145 are excised as a propeptide; that stretch reads DFPEEVTIVEELRRR. Ser150 and Ser152 each carry phosphoserine.

It belongs to the glucagon family. Post-translationally, proglucagon is post-translationally processed in a tissue-specific manner in pancreatic A cells and intestinal L cells. In pancreatic A cells, the major bioactive hormone is glucagon cleaved by PCSK2/PC2. In the intestinal L cells PCSK1/PC1 liberates GLP-1, GLP-2, glicentin and oxyntomodulin. GLP-1 is further N-terminally truncated by post-translational processing in the intestinal L cells resulting in GLP-1(7-37) GLP-1-(7-36)amide. The C-terminal amidation is neither important for the metabolism of GLP-1 nor for its effects on the endocrine pancreas. In terms of tissue distribution, glucagon is secreted in the A cells of the islets of Langerhans. GLP-1, GLP-2, oxyntomodulin and glicentin are secreted from enteroendocrine cells throughout the gastrointestinal tract. GLP-1 and GLP-2 are also secreted in selected neurons in the brain.

Its subcellular location is the secreted. Plays a key role in glucose metabolism and homeostasis. Regulates blood glucose by increasing gluconeogenesis and decreasing glycolysis. A counterregulatory hormone of insulin, raises plasma glucose levels in response to insulin-induced hypoglycemia. Plays an important role in initiating and maintaining hyperglycemic conditions in diabetes. In terms of biological role, potent stimulator of glucose-dependent insulin release. Also stimulates insulin release in response to IL6. Plays important roles on gastric motility and the suppression of plasma glucagon levels. May be involved in the suppression of satiety and stimulation of glucose disposal in peripheral tissues, independent of the actions of insulin. Has growth-promoting activities on intestinal epithelium. May also regulate the hypothalamic pituitary axis (HPA) via effects on LH, TSH, CRH, oxytocin, and vasopressin secretion. Increases islet mass through stimulation of islet neogenesis and pancreatic beta cell proliferation. Inhibits beta cell apoptosis. Its function is as follows. Stimulates intestinal growth and up-regulates villus height in the small intestine, concomitant with increased crypt cell proliferation and decreased enterocyte apoptosis. The gastrointestinal tract, from the stomach to the colon is the principal target for GLP-2 action. Plays a key role in nutrient homeostasis, enhancing nutrient assimilation through enhanced gastrointestinal function, as well as increasing nutrient disposal. Stimulates intestinal glucose transport and decreases mucosal permeability. Functionally, significantly reduces food intake. Inhibits gastric emptying in humans. Suppression of gastric emptying may lead to increased gastric distension, which may contribute to satiety by causing a sensation of fullness. May modulate gastric acid secretion and the gastro-pyloro-duodenal activity. May play an important role in intestinal mucosal growth in the early period of life. This is Pro-glucagon (GCG) from Octodon degus (Degu).